The chain runs to 359 residues: Phosphoserine aminotransferase (359 aa).

An L-glutamate-binding site is contributed by R41. Residues W101, T151, D170, and Q193 each contribute to the pyridoxal 5'-phosphate site. Residue K194 is modified to N6-(pyridoxal phosphate)lysine. 235–236 (NT) contributes to the pyridoxal 5'-phosphate binding site.

The protein belongs to the class-V pyridoxal-phosphate-dependent aminotransferase family. SerC subfamily. As to quaternary structure, homodimer. The cofactor is pyridoxal 5'-phosphate.

It is found in the cytoplasm. It catalyses the reaction O-phospho-L-serine + 2-oxoglutarate = 3-phosphooxypyruvate + L-glutamate. The catalysed reaction is 4-(phosphooxy)-L-threonine + 2-oxoglutarate = (R)-3-hydroxy-2-oxo-4-phosphooxybutanoate + L-glutamate. It participates in amino-acid biosynthesis; L-serine biosynthesis; L-serine from 3-phospho-D-glycerate: step 2/3. Its pathway is cofactor biosynthesis; pyridoxine 5'-phosphate biosynthesis; pyridoxine 5'-phosphate from D-erythrose 4-phosphate: step 3/5. Its function is as follows. Catalyzes the reversible conversion of 3-phosphohydroxypyruvate to phosphoserine and of 3-hydroxy-2-oxo-4-phosphonooxybutanoate to phosphohydroxythreonine. The polypeptide is Phosphoserine aminotransferase (Laribacter hongkongensis (strain HLHK9)).